A 56-amino-acid chain; its full sequence is Large ribosomal subunit protein bL32 (56 aa).

The disordered stretch occupies residues 1–34; that stretch reads MAVQQNKPSRSKRGMRRAHDALKTSTISVDKTSG.

This sequence belongs to the bacterial ribosomal protein bL32 family.

The sequence is that of Large ribosomal subunit protein bL32 from Baumannia cicadellinicola subsp. Homalodisca coagulata.